We begin with the raw amino-acid sequence, 86 residues long: Neuropeptide precursor capa-1 (86 aa).

Residues 1 to 19 (MLLWIVATLLIFSLPVSTA) form the signal peptide.

In terms of tissue distribution, expressed in two pairs of neurons in the anterior part of the nervous system (at protein level).

In terms of biological role, encodes at least three neuropeptides: two of the periviscerokinin family (APHPSSALLVPYPRV-amide and LYMARV-amide) and one pyrokinin (AFFYTPRI-amide). Putative ligand for neuromedin U receptor homolog nmur-2. This Caenorhabditis elegans protein is Neuropeptide precursor capa-1.